We begin with the raw amino-acid sequence, 113 residues long: Hydrogenase maturation factor HypA (113 aa).

Residue histidine 2 participates in Ni(2+) binding. Positions 73, 76, 89, and 92 each coordinate Zn(2+).

The protein belongs to the HypA/HybF family.

In terms of biological role, involved in the maturation of [NiFe] hydrogenases. Required for nickel insertion into the metal center of the hydrogenase. This Chlorobaculum tepidum (strain ATCC 49652 / DSM 12025 / NBRC 103806 / TLS) (Chlorobium tepidum) protein is Hydrogenase maturation factor HypA.